The sequence spans 244 residues: Ribonuclease PH (244 aa).

Phosphate contacts are provided by residues R86 and G124–R126.

The protein belongs to the RNase PH family. In terms of assembly, homohexameric ring arranged as a trimer of dimers.

The catalysed reaction is tRNA(n+1) + phosphate = tRNA(n) + a ribonucleoside 5'-diphosphate. Functionally, phosphorolytic 3'-5' exoribonuclease that plays an important role in tRNA 3'-end maturation. Removes nucleotide residues following the 3'-CCA terminus of tRNAs; can also add nucleotides to the ends of RNA molecules by using nucleoside diphosphates as substrates, but this may not be physiologically important. Probably plays a role in initiation of 16S rRNA degradation (leading to ribosome degradation) during starvation. The sequence is that of Ribonuclease PH from Oceanobacillus iheyensis (strain DSM 14371 / CIP 107618 / JCM 11309 / KCTC 3954 / HTE831).